Consider the following 83-residue polypeptide: Small ribosomal subunit protein bS20 (83 aa).

Belongs to the bacterial ribosomal protein bS20 family.

Binds directly to 16S ribosomal RNA. The sequence is that of Small ribosomal subunit protein bS20 from Staphylococcus haemolyticus (strain JCSC1435).